Consider the following 766-residue polypeptide: Oligopeptide transporter 7 (766 aa).

Residues 1–58 (MEESEQVLPLLTNPKDLTNPSYASSSSSSSEPRDETEDLLLPISDENEEEEEENSPIR) form a disordered region. Residues 45–54 (DENEEEEEEN) are compositionally biased toward acidic residues. Transmembrane regions (helical) follow at residues 79–99 (MWVL…FFWY), 104–124 (LTIS…LMAA), 154–174 (ITIF…VTVV), 184–204 (FFVS…WAGI), 247–267 (FVIA…LFQI), 287–307 (IGSG…STIS), 324–344 (VGVG…WLDV), 390–410 (LCTF…ATIM), 446–466 (VPEW…IFAC), 477–497 (WWGV…IGII), 509–529 (IITE…NMCF), 561–581 (FMAQ…TAWW), 627–647 (LYKS…LVWL), 676–696 (ATAV…FVVF), and 709–729 (VLSG…YMCL).

The protein belongs to the oligopeptide OPT transporter (TC 2.A.67.1) family. Expressed in the major and the first-order veins and in the hydathodes of the leaves. In the roots, expressed in circular zones surrounding lateral root primordia and in some part of the root epidermis. Expressed also in the sepals and the cortical tissues of the stem, but not in the conducting bundles, the petals or the reproductive tissues.

It localises to the membrane. Involved in the translocation of tetra- and pentapeptides across the cellular membrane in an energy-dependent manner. May also transport cadmium complexes. This is Oligopeptide transporter 7 (OPT7) from Arabidopsis thaliana (Mouse-ear cress).